A 404-amino-acid polypeptide reads, in one-letter code: Probable tRNA sulfurtransferase (404 aa).

Residues 60-165 (RSVIEALKPV…DEAAYLSHED (106 aa)) enclose the THUMP domain. ATP-binding positions include 183–184 (ML), 208–209 (HF), arginine 265, glycine 287, and glutamine 296.

Belongs to the ThiI family.

The protein localises to the cytoplasm. It carries out the reaction [ThiI sulfur-carrier protein]-S-sulfanyl-L-cysteine + a uridine in tRNA + 2 reduced [2Fe-2S]-[ferredoxin] + ATP + H(+) = [ThiI sulfur-carrier protein]-L-cysteine + a 4-thiouridine in tRNA + 2 oxidized [2Fe-2S]-[ferredoxin] + AMP + diphosphate. The catalysed reaction is [ThiS sulfur-carrier protein]-C-terminal Gly-Gly-AMP + S-sulfanyl-L-cysteinyl-[cysteine desulfurase] + AH2 = [ThiS sulfur-carrier protein]-C-terminal-Gly-aminoethanethioate + L-cysteinyl-[cysteine desulfurase] + A + AMP + 2 H(+). It functions in the pathway cofactor biosynthesis; thiamine diphosphate biosynthesis. Catalyzes the ATP-dependent transfer of a sulfur to tRNA to produce 4-thiouridine in position 8 of tRNAs, which functions as a near-UV photosensor. Also catalyzes the transfer of sulfur to the sulfur carrier protein ThiS, forming ThiS-thiocarboxylate. This is a step in the synthesis of thiazole, in the thiamine biosynthesis pathway. The sulfur is donated as persulfide by IscS. The protein is Probable tRNA sulfurtransferase of Streptococcus equi subsp. zooepidemicus (strain H70).